The following is a 704-amino-acid chain: METISIDDLPLDIKIIDILKRRGIRTLNPPQSEAIRKGLLDGKRLLVTSPTASGKTLIAELGMINYLLSKGGKAIYITPLRALTNEKYNTFKDWETLGIKTGMTSGDYDTDDAWLENYDIIVTTYEKLDSLWRHKAKWLNEVSYFVLDEFHYLNDPERGPTVESVAIRAKKRGIVLGLSATISNGKEIANWLNAELVATNWRPVPLKEGIIYPEKKGFVVVYKDNTSRKVYGDDAIIAYTLDIVSKGGQVLVFRSSRKLAENTARKIVQYMNFVKLEDKKLLEIARKIKEVEDAGSNEKEDLYNLVLRGVAYHHAGLSKGLRDIIESSFRDRILKVIVATPTLAAGVNLPARAVVIGDIYRYNRKVVGYMDLIPVMDYKQMSGRAGRPGFDENGEAVVVVRNKREAEKVYERYLMSDVEPIESKLGSESAFYSFLISIIASEGEKTTEELMEYVKETLLPKELAKKYFRSGLDWLLQHDIFAEISDKITLTRFGRRISDLYINPFTAVTIREALEKNEKGCEIAYLHLLAYTPDGPSIGVSRAEEDALIDELNCELFVDEPEDEYEFSNYISALKVAYIVYDWVNEIDEDTILGKYGIGSGDLRAIIDTMDWLTYSGYHVASVLELKDHKDILEELHARVKDGVKPELIELVKIPGIGRVRARLLYQHDIKKPEDIVLNPEKVKQLLGPNLGEKIVREAARTIA.

Residues Gln-31 and 49–56 (SPTASGKT) contribute to the ATP site. Positions 36 to 200 (RKGLLDGKRL…WLNAELVATN (165 aa)) constitute a Helicase ATP-binding domain. The short motif at 148–151 (DEFH) is the DEAH box element. The region spanning 235-439 (AIIAYTLDIV…AFYSFLISII (205 aa)) is the Helicase C-terminal domain. Residues 366–645 (VVGYMDLIPV…LHARVKDGVK (280 aa)) are binds Hjc. The interval 432 to 644 (YSFLISIIAS…ELHARVKDGV (213 aa)) is required for helicase activity. Positions 646–704 (PELIELVKIPGIGRVRARLLYQHDIKKPEDIVLNPEKVKQLLGPNLGEKIVREAARTIA) are inhibits intrinsic ATPase, and helicase.

Belongs to the helicase family. Hel308 subfamily. In terms of assembly, monomer; forms a 1:2 complex with Hjc, which may form a complex with Holliday junction DNA. Mg(2+) is required as a cofactor.

The enzyme catalyses Couples ATP hydrolysis with the unwinding of duplex DNA by translocating in the 3'-5' direction.. It catalyses the reaction ATP + H2O = ADP + phosphate + H(+). The catalysed reaction is Couples ATP hydrolysis with the unwinding of duplex DNA at the replication fork by translocating in the 5'-3' direction. This creates two antiparallel DNA single strands (ssDNA). The leading ssDNA polymer is the template for DNA polymerase III holoenzyme which synthesizes a continuous strand.. Its activity is regulated as follows. Helicase activity is inhibited by Hjc and by PCNA123 and PCNA323. In terms of biological role, an ATP, Mg(2+)-dependent DNA 3'-5' and 5'-3' helicase that may be involved in repair of stalled replication forks. Stimulated by both ss and dsDNA. Unwinds both leading and lagging strands in replication fork structures, unlike orthologs in P.furiosus and M.thermautotrophicus which only unwind the lagging strand and only have 3'-5' helicase activity. Preferentially binds dsDNA with overhangs or branched DNA. Able to anneal DNA substrates that could form a replication fork-like structure, has replication fork reversal activity (at least in vitro). This chain is ATP-dependent DNA helicase Hel308, found in Sulfurisphaera tokodaii (strain DSM 16993 / JCM 10545 / NBRC 100140 / 7) (Sulfolobus tokodaii).